The following is a 415-amino-acid chain: Serine--tRNA ligase (415 aa).

231-233 contacts L-serine; it reads TAE. Position 262–264 (262–264) interacts with ATP; that stretch reads RSE. E285 is a binding site for L-serine. ATP is bound at residue 349–352; sequence EISS. An L-serine-binding site is contributed by S383.

The protein belongs to the class-II aminoacyl-tRNA synthetase family. Type-1 seryl-tRNA synthetase subfamily. Homodimer. The tRNA molecule binds across the dimer.

It localises to the cytoplasm. It catalyses the reaction tRNA(Ser) + L-serine + ATP = L-seryl-tRNA(Ser) + AMP + diphosphate + H(+). The enzyme catalyses tRNA(Sec) + L-serine + ATP = L-seryl-tRNA(Sec) + AMP + diphosphate + H(+). It participates in aminoacyl-tRNA biosynthesis; selenocysteinyl-tRNA(Sec) biosynthesis; L-seryl-tRNA(Sec) from L-serine and tRNA(Sec): step 1/1. Its function is as follows. Catalyzes the attachment of serine to tRNA(Ser). Is also able to aminoacylate tRNA(Sec) with serine, to form the misacylated tRNA L-seryl-tRNA(Sec), which will be further converted into selenocysteinyl-tRNA(Sec). In Helicobacter pylori (strain HPAG1), this protein is Serine--tRNA ligase.